Reading from the N-terminus, the 157-residue chain is Transcriptional repressor NrdR (157 aa).

The segment at 3–34 (CPFCRHPDSRVVDSRTSDDGLSIRRRRQCPEC) is a zinc-finger region. Residues 46 to 136 (LSVIKRNGVV…VYQGFDSLDD (91 aa)) enclose the ATP-cone domain.

The protein belongs to the NrdR family. The cofactor is Zn(2+).

Negatively regulates transcription of bacterial ribonucleotide reductase nrd genes and operons by binding to NrdR-boxes. The sequence is that of Transcriptional repressor NrdR from Clavibacter sepedonicus (Clavibacter michiganensis subsp. sepedonicus).